The sequence spans 706 residues: K(+)-insensitive pyrophosphate-energized proton pump (706 aa).

Transmembrane regions (helical) follow at residues 1–21 (MTALWLIVLCGVLSVVYAIWA), 62–82 (IVIFVLLVYFLGFYVAIGFAI), 83–103 (GAILSGAAGFIGMNVSVRANV), 128–148 (GMLVAGLALLGVTLYFGFLVY), and 164–184 (VALGFGASLISIFARLGGGIF). Lys186 provides a ligand contact to substrate. Mg(2+) contacts are provided by Asp189, Asp193, Asn216, and Asp219. A run of 6 helical transmembrane segments spans residues 231-251 (LFETYAVTAVATMVLAAIFFA), 261-281 (TLPLAIGGICIITSIIGTFFV), 298-318 (IATGVLSLIGIAVVIYTLIGF), 328-348 (GMSLFECGVVGLIVTALIIWI), 376-398 (IQGLAISMEATALPAIVIIAGIL), and 412-432 (ATATMLALAGMIVALDAFGPV). Asp434 contributes to the Mg(2+) binding site. The next 4 membrane-spanning stretches (helical) occupy residues 465 to 485 (AVTKGYAIGSAGLGALVLFAA), 516 to 536 (YVVVGLLFGGLLPYLFGAMGM), 585 to 605 (IIPSLLPVLSPIVVYFLIYAI), and 616 to 636 (AFSAVGAMLLGVIVTGLFVAI). 3 residues coordinate Ca(2+): Asp646, Asp672, and Asp676. Lys679 provides a ligand contact to substrate. The helical transmembrane segment at 685-705 (AVNPMIKITNIVALLLLAILA) threads the bilayer.

This sequence belongs to the H(+)-translocating pyrophosphatase (TC 3.A.10) family. K(+)-insensitive subfamily. As to quaternary structure, homodimer. The cofactor is Mg(2+).

It is found in the cell inner membrane. It carries out the reaction diphosphate + H2O + H(+)(in) = 2 phosphate + 2 H(+)(out). In terms of biological role, proton pump that utilizes the energy of pyrophosphate hydrolysis as the driving force for proton movement across the membrane. Generates a proton motive force. The chain is K(+)-insensitive pyrophosphate-energized proton pump from Bradyrhizobium diazoefficiens (strain JCM 10833 / BCRC 13528 / IAM 13628 / NBRC 14792 / USDA 110).